The following is a 259-amino-acid chain: Phosphoribosylaminoimidazole-succinocarboxamide synthase (259 aa).

It belongs to the SAICAR synthetase family.

It catalyses the reaction 5-amino-1-(5-phospho-D-ribosyl)imidazole-4-carboxylate + L-aspartate + ATP = (2S)-2-[5-amino-1-(5-phospho-beta-D-ribosyl)imidazole-4-carboxamido]succinate + ADP + phosphate + 2 H(+). It functions in the pathway purine metabolism; IMP biosynthesis via de novo pathway; 5-amino-1-(5-phospho-D-ribosyl)imidazole-4-carboxamide from 5-amino-1-(5-phospho-D-ribosyl)imidazole-4-carboxylate: step 1/2. The sequence is that of Phosphoribosylaminoimidazole-succinocarboxamide synthase from Hyphomonas neptunium (strain ATCC 15444).